A 178-amino-acid chain; its full sequence is SCAN domain-containing protein 1 (178 aa).

A disordered region spans residues 1-107 (MAATEQSLAP…GSRPGPETFR (107 aa)). Residues 9–18 (APAGSSAPPS) show a composition bias toward low complexity. Residues 36–54 (GSSSTPEAPSIPDSSNPSA) are compositionally biased toward polar residues. One can recognise an SCAN box domain in the interval 107-178 (RQRFRQFRYQ…RRRTDVRITG (72 aa)).

Interacts with ZNF202.

Its subcellular location is the nucleus. In terms of biological role, may regulate transcriptional activity. In Bos taurus (Bovine), this protein is SCAN domain-containing protein 1 (SCAND1).